Reading from the N-terminus, the 221-residue chain is Octanoyltransferase (221 aa).

The region spanning 35-221 (ESYENRIIFC…RELLAALLSK (187 aa)) is the BPL/LPL catalytic domain. Substrate is bound by residues 80–87 (RGGDITYH), 152–154 (AIG), and 165–167 (GLA). The active-site Acyl-thioester intermediate is C183.

The protein belongs to the LipB family.

The protein resides in the cytoplasm. It catalyses the reaction octanoyl-[ACP] + L-lysyl-[protein] = N(6)-octanoyl-L-lysyl-[protein] + holo-[ACP] + H(+). The protein operates within protein modification; protein lipoylation via endogenous pathway; protein N(6)-(lipoyl)lysine from octanoyl-[acyl-carrier-protein]: step 1/2. In terms of biological role, catalyzes the transfer of endogenously produced octanoic acid from octanoyl-acyl-carrier-protein onto the lipoyl domains of lipoate-dependent enzymes. Lipoyl-ACP can also act as a substrate although octanoyl-ACP is likely to be the physiological substrate. The polypeptide is Octanoyltransferase (Bacteroides fragilis (strain YCH46)).